Here is a 184-residue protein sequence, read N- to C-terminus: Ribosome maturation factor RimM (184 aa).

Residues 101–180 form the PRC barrel domain; the sequence is EGEFFYCDLV…KITTHNAKTL (80 aa).

This sequence belongs to the RimM family. Binds ribosomal protein uS19.

It localises to the cytoplasm. Functionally, an accessory protein needed during the final step in the assembly of 30S ribosomal subunit, possibly for assembly of the head region. Essential for efficient processing of 16S rRNA. May be needed both before and after RbfA during the maturation of 16S rRNA. It has affinity for free ribosomal 30S subunits but not for 70S ribosomes. This is Ribosome maturation factor RimM from Helicobacter pylori (strain ATCC 700392 / 26695) (Campylobacter pylori).